A 124-amino-acid polypeptide reads, in one-letter code: Ribonuclease pancreatic (124 aa).

Over residues 1–13 (KESAAAKFERQHM) the composition is skewed to basic and acidic residues. Positions 1 to 23 (KESAAAKFERQHMDPSASSISSS) are disordered. 2 residues coordinate substrate: Lys-7 and Arg-10. The Proton acceptor role is filled by His-12. 4 cysteine pairs are disulfide-bonded: Cys-26–Cys-84, Cys-40–Cys-95, Cys-58–Cys-110, and Cys-65–Cys-72. N-linked (GlcNAc...) asparagine glycosylation occurs at Asn-34. Residues 41-45 (KPVNT), Lys-66, and Arg-85 each bind substrate. The active-site Proton donor is the His-119.

It belongs to the pancreatic ribonuclease family. In terms of assembly, monomer. Interacts with and forms tight 1:1 complexes with RNH1. Dimerization of two such complexes may occur. Interaction with RNH1 inhibits this protein. Pancreas.

The protein resides in the secreted. The enzyme catalyses an [RNA] containing cytidine + H2O = an [RNA]-3'-cytidine-3'-phosphate + a 5'-hydroxy-ribonucleotide-3'-[RNA].. It carries out the reaction an [RNA] containing uridine + H2O = an [RNA]-3'-uridine-3'-phosphate + a 5'-hydroxy-ribonucleotide-3'-[RNA].. Its function is as follows. Endonuclease that catalyzes the cleavage of RNA on the 3' side of pyrimidine nucleotides. Acts on single-stranded and double-stranded RNA. The sequence is that of Ribonuclease pancreatic (RNASE1) from Alces alces alces (European moose).